Here is a 48-residue protein sequence, read N- to C-terminus: NVYQYRKMLQCAMPNGGPFECCQTHDNCYGEAEKLKACTSTHSSPYFK.

The active site involves H25. Ca(2+) is bound at residue D26.

This sequence belongs to the phospholipase A2 family. Group I subfamily. D49 sub-subfamily. Monomer. Ca(2+) is required as a cofactor. Expressed by the venom gland.

It localises to the secreted. It carries out the reaction a 1,2-diacyl-sn-glycero-3-phosphocholine + H2O = a 1-acyl-sn-glycero-3-phosphocholine + a fatty acid + H(+). Functionally, phospholipase A2 with weak enzymatic activity, which partially inhibits thrombin enzymatic activity (Ki=73 nM), completely inhibits thrombin-induced platelet aggregation and retards fibrin clot formation (IC(50)=0.2 nM). May exert this anticoagulant effect through a non-enzymatic mechanism. The polypeptide is Phospholipase A2 TI-Nh (Naja haje haje (Egyptian cobra)).